Reading from the N-terminus, the 323-residue chain is Beta-ketoacyl-[acyl-carrier-protein] synthase III (323 aa).

Active-site residues include Cys-113 and His-250. The ACP-binding stretch occupies residues Gln-251–Arg-255. Asn-280 is a catalytic residue.

Belongs to the thiolase-like superfamily. FabH family. In terms of assembly, homodimer.

The protein resides in the cytoplasm. The catalysed reaction is malonyl-[ACP] + acetyl-CoA + H(+) = 3-oxobutanoyl-[ACP] + CO2 + CoA. It participates in lipid metabolism; fatty acid biosynthesis. In terms of biological role, catalyzes the condensation reaction of fatty acid synthesis by the addition to an acyl acceptor of two carbons from malonyl-ACP. Catalyzes the first condensation reaction which initiates fatty acid synthesis and may therefore play a role in governing the total rate of fatty acid production. Possesses both acetoacetyl-ACP synthase and acetyl transacylase activities. Its substrate specificity determines the biosynthesis of branched-chain and/or straight-chain of fatty acids. In Brucella abortus biovar 1 (strain 9-941), this protein is Beta-ketoacyl-[acyl-carrier-protein] synthase III.